A 629-amino-acid chain; its full sequence is UvrABC system protein C (629 aa).

The GIY-YIG domain occupies 12 to 91; that stretch reads DRPGCYLFKD…IKKHKPKYNI (80 aa). Positions 200–235 constitute a UVR domain; that stretch reads QEVLERLRARMEQAAERLEFERAAELRDQIRAIEKV.

It belongs to the UvrC family. In terms of assembly, interacts with UvrB in an incision complex.

It is found in the cytoplasm. The UvrABC repair system catalyzes the recognition and processing of DNA lesions. UvrC both incises the 5' and 3' sides of the lesion. The N-terminal half is responsible for the 3' incision and the C-terminal half is responsible for the 5' incision. The sequence is that of UvrABC system protein C from Symbiobacterium thermophilum (strain DSM 24528 / JCM 14929 / IAM 14863 / T).